The primary structure comprises 553 residues: Thermosome subunit beta (553 aa).

A disordered region spans residues 534 to 553 (KKSEGKTGEKKESEKGKEED).

It belongs to the TCP-1 chaperonin family. In terms of assembly, forms a Heterooligomeric complex of two stacked eight-membered rings.

Functionally, molecular chaperone; binds unfolded polypeptides in vitro, and has a weak ATPase activity. In Sulfolobus acidocaldarius (strain ATCC 33909 / DSM 639 / JCM 8929 / NBRC 15157 / NCIMB 11770), this protein is Thermosome subunit beta (thsB).